Here is a 368-residue protein sequence, read N- to C-terminus: Peptide chain release factor 2 (368 aa).

Gln-251 is subject to N5-methylglutamine.

It belongs to the prokaryotic/mitochondrial release factor family. Methylated by PrmC. Methylation increases the termination efficiency of RF2.

The protein resides in the cytoplasm. Peptide chain release factor 2 directs the termination of translation in response to the peptide chain termination codons UGA and UAA. The sequence is that of Peptide chain release factor 2 from Wolinella succinogenes (strain ATCC 29543 / DSM 1740 / CCUG 13145 / JCM 31913 / LMG 7466 / NCTC 11488 / FDC 602W) (Vibrio succinogenes).